A 166-amino-acid polypeptide reads, in one-letter code: uncharacterized protein (166 aa).

Composition is skewed to basic and acidic residues over residues Met1–Ser13, Lys21–Glu112, and Asp119–Gly137. Positions Met1 to Thr144 are disordered. 8 tandem repeats follow at residues Asp31–Lys41, Asp42–Lys52, Asp53–Lys63, Asp64–Lys74, Asp75–Lys85, Asp86–Lys96, Asp97–Lys107, and Asp108–Arg118. Positions Asp31–Arg118 are 8 X 11 AA approximate tandem repeats of D-K-T-K-E-T-A-G/E-S-A-K.

This sequence belongs to the LEA type 1 family.

This is an uncharacterized protein from Encephalitozoon cuniculi (strain GB-M1) (Microsporidian parasite).